Consider the following 170-residue polypeptide: MEARSKPQFLAFLILFSVLFSQSLAWPLFGPPSVVRLDDRMPFEGAGDPDQVSLKADSDILQNPLAENGTPYYDVSRNARHADGVFTSDYSRLLGQISAKKYLESLIGKRISSSISEDPVPIKRHSDAVFTDNYTRLRKQMAVKKYLNSILNGKRSSEGDSADFLEELEK.

The first 21 residues, 1–21 (MEARSKPQFLAFLILFSVLFS), serve as a signal peptide directing secretion. The propeptide occupies 22 to 79 (QSLAWPLFGPPSVVRLDDRMPFEGAGDPDQVSLKADSDILQNPLAENGTPYYDVSRNA). The residue at position 76 (S76) is a Phosphoserine. Position 107 is an isoleucine amide (I107). A glycan (N-linked (GlcNAc...) asparagine) is linked at N133. Asparagine amide is present on N152. The propeptide occupies 156–170 (SSEGDSADFLEELEK).

It belongs to the glucagon family.

The protein resides in the secreted. Functionally, VIP is a neuropeptide involved in a diverse array of physiological processes through activating the PACAP subfamily of class B1 G protein-coupled receptors: VIP receptor 1 (VPR1) and VIP receptor 2 (VPR2). Abundantly expressed throughout the CNS and peripheral nervous systems where they primarily exert neuroprotective and immune modulatory roles. Also causes vasodilation, lowers arterial blood pressure, stimulates myocardial contractility, increases glycogenolysis and relaxes the smooth muscle of trachea, stomach and gall bladder. Its function is as follows. PHM-27 and PHV-42 are two bioactive forms from proteolysis of the same precursor protein, that cause vasodilation. PHM-27 is a potent agonist of the calcitonin receptor CALCR, with similar efficacy as calcitonin. The protein is VIP peptides (Vip) of Mus musculus (Mouse).